The chain runs to 209 residues: Protease (209 aa).

Active-site residues include histidine 60, aspartate 77, and cysteine 127.

The protein belongs to the peptidase C5 family. As to quaternary structure, interacts with protease cofactor pVI-C; this interaction is necessary for protease activation.

The protein resides in the virion. The protein localises to the host nucleus. The catalysed reaction is Cleaves proteins of the adenovirus and its host cell at two consensus sites: -Yaa-Xaa-Gly-Gly-|-Xaa- and -Yaa-Xaa-Gly-Xaa-|-Gly- (in which Yaa is Met, Ile or Leu, and Xaa is any amino acid).. With respect to regulation, requires DNA and protease cofactor for maximal activation. Inside nascent virions, becomes partially activated by binding to the viral DNA, allowing it to cleave the cofactor that binds to the protease and fully activates it. Actin, like the viral protease cofactor, seems to act as a cofactor in the cleavage of cytokeratin 18 and of actin itself. Cleaves viral precursor proteins (pTP, pIIIa, pVI, pVII, pVIII, and pX) inside newly assembled particles giving rise to mature virions. Protease complexed to its cofactor slides along the viral DNA to specifically locate and cleave the viral precursors. Mature virions have a weakened organization compared to the unmature virions, thereby facilitating subsequent uncoating. Without maturation, the particle lacks infectivity and is unable to uncoat. Late in adenovirus infection, in the cytoplasm, may participate in the cytoskeleton destruction. Cleaves host cell cytoskeletal keratins K7 and K18. The polypeptide is Protease (Homo sapiens (Human)).